Here is a 179-residue protein sequence, read N- to C-terminus: ATP-dependent protease subunit HslV (179 aa).

T7 is a catalytic residue. G162, C165, and T168 together coordinate Na(+).

This sequence belongs to the peptidase T1B family. HslV subfamily. As to quaternary structure, a double ring-shaped homohexamer of HslV is capped on each side by a ring-shaped HslU homohexamer. The assembly of the HslU/HslV complex is dependent on binding of ATP.

The protein resides in the cytoplasm. The catalysed reaction is ATP-dependent cleavage of peptide bonds with broad specificity.. Allosterically activated by HslU binding. Protease subunit of a proteasome-like degradation complex believed to be a general protein degrading machinery. The sequence is that of ATP-dependent protease subunit HslV from Teredinibacter turnerae (strain ATCC 39867 / T7901).